Consider the following 198-residue polypeptide: Elongation factor Ts (198 aa).

The involved in Mg(2+) ion dislocation from EF-Tu stretch occupies residues Thr-81–Val-84.

The protein belongs to the EF-Ts family.

The protein localises to the cytoplasm. Functionally, associates with the EF-Tu.GDP complex and induces the exchange of GDP to GTP. It remains bound to the aminoacyl-tRNA.EF-Tu.GTP complex up to the GTP hydrolysis stage on the ribosome. This chain is Elongation factor Ts, found in Dictyoglomus turgidum (strain DSM 6724 / Z-1310).